Reading from the N-terminus, the 169-residue chain is Ribosome maturation factor RimM (169 aa).

The region spanning 93–167 (PENSFFISDI…KISVILPKGL (75 aa)) is the PRC barrel domain.

It belongs to the RimM family. Binds ribosomal protein uS19.

It is found in the cytoplasm. Functionally, an accessory protein needed during the final step in the assembly of 30S ribosomal subunit, possibly for assembly of the head region. Essential for efficient processing of 16S rRNA. May be needed both before and after RbfA during the maturation of 16S rRNA. It has affinity for free ribosomal 30S subunits but not for 70S ribosomes. The sequence is that of Ribosome maturation factor RimM from Ruminiclostridium cellulolyticum (strain ATCC 35319 / DSM 5812 / JCM 6584 / H10) (Clostridium cellulolyticum).